Reading from the N-terminus, the 508-residue chain is 2-isopropylmalate synthase (508 aa).

A Pyruvate carboxyltransferase domain is found at 5-267 (IKIFDTTLRD…THRIDTTQIY (263 aa)). Residues aspartate 14, histidine 202, histidine 204, and asparagine 238 each contribute to the Mn(2+) site. A regulatory domain region spans residues 390-508 (VIDSFQINSG…SEIGESIISQ (119 aa)).

The protein belongs to the alpha-IPM synthase/homocitrate synthase family. LeuA type 1 subfamily. In terms of assembly, homodimer. It depends on Mn(2+) as a cofactor.

Its subcellular location is the cytoplasm. The enzyme catalyses 3-methyl-2-oxobutanoate + acetyl-CoA + H2O = (2S)-2-isopropylmalate + CoA + H(+). The protein operates within amino-acid biosynthesis; L-leucine biosynthesis; L-leucine from 3-methyl-2-oxobutanoate: step 1/4. Catalyzes the condensation of the acetyl group of acetyl-CoA with 3-methyl-2-oxobutanoate (2-ketoisovalerate) to form 3-carboxy-3-hydroxy-4-methylpentanoate (2-isopropylmalate). The sequence is that of 2-isopropylmalate synthase from Ruminiclostridium cellulolyticum (strain ATCC 35319 / DSM 5812 / JCM 6584 / H10) (Clostridium cellulolyticum).